A 203-amino-acid chain; its full sequence is Thymidylate kinase (203 aa).

Residue glycine 14 to serine 21 coordinates ATP.

Belongs to the thymidylate kinase family.

It carries out the reaction dTMP + ATP = dTDP + ADP. In terms of biological role, phosphorylation of dTMP to form dTDP in both de novo and salvage pathways of dTTP synthesis. The polypeptide is Thymidylate kinase (Rickettsia canadensis (strain McKiel)).